The primary structure comprises 218 residues: Probable 1-Cys peroxiredoxin (218 aa).

Residues 5-166 (WALGDLVPDI…VLRVLDSLQL (162 aa)) enclose the Thioredoxin domain. Cys-47 acts as the Cysteine sulfenic acid (-SOH) intermediate in catalysis.

This sequence belongs to the peroxiredoxin family. Prx6 subfamily.

The protein localises to the nucleus. It localises to the cytoplasm. It carries out the reaction a hydroperoxide + [thioredoxin]-dithiol = an alcohol + [thioredoxin]-disulfide + H2O. Functionally, thiol-specific peroxidase that catalyzes the reduction of hydrogen peroxide and organic hydroperoxides to water and alcohols, respectively. Seems to contribute to the inhibition of germination during stress. Associated with the rehydration events involved in the recovery of the desiccation-tolerant moss. The protein is Probable 1-Cys peroxiredoxin of Syntrichia ruralis (Great hairy screw-moss).